A 538-amino-acid polypeptide reads, in one-letter code: Thermosome subunit beta (538 aa).

A disordered region spans residues 518-538 (SSGSSEEGMEEMGGMGGMPPM). A compositionally biased stretch (gly residues) spans 528-538 (EMGGMGGMPPM).

It belongs to the TCP-1 chaperonin family. In terms of assembly, forms a Heterooligomeric complex of two stacked eight-membered rings.

Molecular chaperone; binds unfolded polypeptides in vitro, and has a weak ATPase activity. In Methanothermobacter thermautotrophicus (strain ATCC 29096 / DSM 1053 / JCM 10044 / NBRC 100330 / Delta H) (Methanobacterium thermoautotrophicum), this protein is Thermosome subunit beta (thsB).